The following is a 307-amino-acid chain: Sesquiterpene synthase-like protein Agr10 (307 aa).

Residues G287–R307 are disordered. Residues E296 to R307 show a composition bias toward polar residues.

It belongs to the terpene synthase family.

This chain is Sesquiterpene synthase-like protein Agr10, found in Cyclocybe aegerita (Black poplar mushroom).